We begin with the raw amino-acid sequence, 64 residues long: Large ribosomal subunit protein bL35 (64 aa).

The protein belongs to the bacterial ribosomal protein bL35 family.

This is Large ribosomal subunit protein bL35 from Levilactobacillus brevis (strain ATCC 367 / BCRC 12310 / CIP 105137 / JCM 1170 / LMG 11437 / NCIMB 947 / NCTC 947) (Lactobacillus brevis).